The primary structure comprises 414 residues: Multifunctional CCA protein (414 aa).

Residues G8 and R11 each contribute to the ATP site. Positions 8 and 11 each coordinate CTP. Positions 21 and 23 each coordinate Mg(2+). Residues R91, R137, and R140 each coordinate ATP. Residues R91, R137, and R140 each coordinate CTP. The 102-residue stretch at 228–329 (TGIHTMMTVA…LKLFDAIDVW (102 aa)) folds into the HD domain.

Belongs to the tRNA nucleotidyltransferase/poly(A) polymerase family. Bacterial CCA-adding enzyme type 1 subfamily. As to quaternary structure, monomer. Can also form homodimers and oligomers. The cofactor is Mg(2+). It depends on Ni(2+) as a cofactor.

The catalysed reaction is a tRNA precursor + 2 CTP + ATP = a tRNA with a 3' CCA end + 3 diphosphate. It carries out the reaction a tRNA with a 3' CCA end + 2 CTP + ATP = a tRNA with a 3' CCACCA end + 3 diphosphate. Catalyzes the addition and repair of the essential 3'-terminal CCA sequence in tRNAs without using a nucleic acid template. Adds these three nucleotides in the order of C, C, and A to the tRNA nucleotide-73, using CTP and ATP as substrates and producing inorganic pyrophosphate. tRNA 3'-terminal CCA addition is required both for tRNA processing and repair. Also involved in tRNA surveillance by mediating tandem CCA addition to generate a CCACCA at the 3' terminus of unstable tRNAs. While stable tRNAs receive only 3'-terminal CCA, unstable tRNAs are marked with CCACCA and rapidly degraded. The chain is Multifunctional CCA protein from Pectobacterium atrosepticum (strain SCRI 1043 / ATCC BAA-672) (Erwinia carotovora subsp. atroseptica).